The primary structure comprises 112 residues: Ferredoxin, plant-type (112 aa).

The 92-residue stretch at 6 to 97 folds into the 2Fe-2S ferredoxin-type domain; it reads YEVFEVLSGQ…DLTIEYFRHV (92 aa). Residues cysteine 41, cysteine 46, cysteine 49, and cysteine 81 each coordinate [2Fe-2S] cluster.

The protein belongs to the 2Fe2S plant-type ferredoxin family.

It functions in the pathway aromatic compound metabolism; catechol degradation. Ferredoxins are iron-sulfur proteins that transfer electrons in a wide variety of metabolic reactions. This chain is Ferredoxin, plant-type (xylT), found in Pseudomonas putida (Arthrobacter siderocapsulatus).